Reading from the N-terminus, the 403-residue chain is Arginine biosynthesis bifunctional protein ArgJ (403 aa).

Substrate is bound by residues T151, K177, T188, E275, N398, and S403. The Nucleophile role is filled by T188.

Belongs to the ArgJ family. In terms of assembly, heterotetramer of two alpha and two beta chains.

It localises to the cytoplasm. The catalysed reaction is N(2)-acetyl-L-ornithine + L-glutamate = N-acetyl-L-glutamate + L-ornithine. It catalyses the reaction L-glutamate + acetyl-CoA = N-acetyl-L-glutamate + CoA + H(+). Its pathway is amino-acid biosynthesis; L-arginine biosynthesis; L-ornithine and N-acetyl-L-glutamate from L-glutamate and N(2)-acetyl-L-ornithine (cyclic): step 1/1. It functions in the pathway amino-acid biosynthesis; L-arginine biosynthesis; N(2)-acetyl-L-ornithine from L-glutamate: step 1/4. Catalyzes two activities which are involved in the cyclic version of arginine biosynthesis: the synthesis of N-acetylglutamate from glutamate and acetyl-CoA as the acetyl donor, and of ornithine by transacetylation between N(2)-acetylornithine and glutamate. The protein is Arginine biosynthesis bifunctional protein ArgJ of Caulobacter vibrioides (strain ATCC 19089 / CIP 103742 / CB 15) (Caulobacter crescentus).